The sequence spans 152 residues: D-aminoacyl-tRNA deacylase (152 aa).

The Gly-cisPro motif, important for rejection of L-amino acids signature appears at 142–143 (GP).

It belongs to the DTD family. As to quaternary structure, homodimer.

It localises to the cytoplasm. The catalysed reaction is glycyl-tRNA(Ala) + H2O = tRNA(Ala) + glycine + H(+). The enzyme catalyses a D-aminoacyl-tRNA + H2O = a tRNA + a D-alpha-amino acid + H(+). Functionally, an aminoacyl-tRNA editing enzyme that deacylates mischarged D-aminoacyl-tRNAs. Also deacylates mischarged glycyl-tRNA(Ala), protecting cells against glycine mischarging by AlaRS. Acts via tRNA-based rather than protein-based catalysis; rejects L-amino acids rather than detecting D-amino acids in the active site. By recycling D-aminoacyl-tRNA to D-amino acids and free tRNA molecules, this enzyme counteracts the toxicity associated with the formation of D-aminoacyl-tRNA entities in vivo and helps enforce protein L-homochirality. The polypeptide is D-aminoacyl-tRNA deacylase (Burkholderia ambifaria (strain ATCC BAA-244 / DSM 16087 / CCUG 44356 / LMG 19182 / AMMD) (Burkholderia cepacia (strain AMMD))).